The primary structure comprises 1259 residues: Trafficking protein particle complex subunit 10 (1259 aa).

Phosphoserine is present on Ser708. The segment at 1189 to 1222 (LSVDKHGDDQPDSSSLKSRGSVHSACSSEHKGLP) is disordered.

This sequence belongs to the TRAPPC10 family. Specific component of the multisubunit TRAPP II complex, which includes at least TRAPPC1, TRAPPC2, TRAPPC3, TRAPPC4, TRAPPC5, TRAPPC6A/B, TRAPPC9, TRAPPC10 and TRAPPC14. TRAPPC9, TRAPPC10 and TRAPPC14 are specific subunits of the TRAPP II complex. Interacts with TRAPPC14. In terms of tissue distribution, expressed in all tissues examined.

The protein localises to the golgi apparatus. Its subcellular location is the cis-Golgi network. Specific subunit of the TRAPP (transport protein particle) II complex, a highly conserved vesicle tethering complex that functions in late Golgi trafficking as a membrane tether. The sequence is that of Trafficking protein particle complex subunit 10 (TRAPPC10) from Homo sapiens (Human).